The sequence spans 598 residues: Chaperone protein DnaK (598 aa).

Thr175 carries the post-translational modification Phosphothreonine; by autocatalysis. A compositionally biased stretch (low complexity) spans 571-591 (AKSAAASSNKDDSLNNNSSSN). The disordered stretch occupies residues 571–598 (AKSAAASSNKDDSLNNNSSSNNDEETFE).

Belongs to the heat shock protein 70 family.

Its function is as follows. Acts as a chaperone. The polypeptide is Chaperone protein DnaK (Mycoplasmopsis agalactiae (strain NCTC 10123 / CIP 59.7 / PG2) (Mycoplasma agalactiae)).